The chain runs to 1162 residues: Sialidase (1162 aa).

BNR repeat units follow at residues 23–34 (KYSVDDGETWET), 163–174 (FYSEDDGKTWKF), and 209–220 (YESSDMEKPWVE). N342 and N394 each carry an N-linked (GlcNAc...) asparagine glycan. Residues 587-1123 (HMDSSSDSSA…STPSTPAGSS (537 aa)) are disordered. Low complexity predominate over residues 589–615 (DSSSDSSAHSTPSTPADSSAHSTPSTP). The interval 589–1120 (DSSSDSSAHS…SAHSTPSTPA (532 aa)) is 44 X 12 AA tandem repeats, LTR domain. 2 stretches are compositionally biased toward polar residues: residues 616 to 689 (VDSS…TPVD) and 699 to 1123 (PADS…AGSS). N1125 carries an N-linked (GlcNAc...) asparagine glycan.

It belongs to the glycosyl hydrolase 33 family.

The protein resides in the cell membrane. It catalyses the reaction Hydrolysis of alpha-(2-&gt;3)-, alpha-(2-&gt;6)-, alpha-(2-&gt;8)- glycosidic linkages of terminal sialic acid residues in oligosaccharides, glycoproteins, glycolipids, colominic acid and synthetic substrates.. Functionally, developmentally regulated neuraminidase implicated in parasite invasion of cells. The chain is Sialidase (TCNA) from Trypanosoma cruzi.